The sequence spans 430 residues: Enolase (430 aa).

Glutamine 163 contributes to the (2R)-2-phosphoglycerate binding site. Glutamate 205 (proton donor) is an active-site residue. The Mg(2+) site is built by aspartate 242, glutamate 288, and aspartate 315. Lysine 340, arginine 369, serine 370, and lysine 391 together coordinate (2R)-2-phosphoglycerate. Lysine 340 (proton acceptor) is an active-site residue.

Belongs to the enolase family. Mg(2+) is required as a cofactor.

The protein resides in the cytoplasm. Its subcellular location is the secreted. It localises to the cell surface. It catalyses the reaction (2R)-2-phosphoglycerate = phosphoenolpyruvate + H2O. The protein operates within carbohydrate degradation; glycolysis; pyruvate from D-glyceraldehyde 3-phosphate: step 4/5. Its function is as follows. Catalyzes the reversible conversion of 2-phosphoglycerate (2-PG) into phosphoenolpyruvate (PEP). It is essential for the degradation of carbohydrates via glycolysis. This is Enolase from Phytoplasma australiense.